Here is a 172-residue protein sequence, read N- to C-terminus: Chorion protein S18 (172 aa).

The first 17 residues, 1–17 (MMKFMCICLCAISAVSA), serve as a signal peptide directing secretion.

Belongs to the chorion protein S15/S18 family.

The protein localises to the secreted. Functionally, chorion membrane (egg shell) protein; plays a role in protecting the egg from the environment. The protein is Chorion protein S18 (Cp18) of Drosophila melanogaster (Fruit fly).